The primary structure comprises 118 residues: Large ribosomal subunit protein bL20 (118 aa).

Belongs to the bacterial ribosomal protein bL20 family.

Functionally, binds directly to 23S ribosomal RNA and is necessary for the in vitro assembly process of the 50S ribosomal subunit. It is not involved in the protein synthesizing functions of that subunit. The protein is Large ribosomal subunit protein bL20 of Alteromonas mediterranea (strain DSM 17117 / CIP 110805 / LMG 28347 / Deep ecotype).